Here is a 258-residue protein sequence, read N- to C-terminus: Ribosomal RNA small subunit methyltransferase J (258 aa).

Residues 107 to 108, 123 to 124, and Asp177 each bind S-adenosyl-L-methionine; these read RD and ER.

This sequence belongs to the methyltransferase superfamily. RsmJ family.

The protein resides in the cytoplasm. The enzyme catalyses guanosine(1516) in 16S rRNA + S-adenosyl-L-methionine = N(2)-methylguanosine(1516) in 16S rRNA + S-adenosyl-L-homocysteine + H(+). Specifically methylates the guanosine in position 1516 of 16S rRNA. This Stutzerimonas stutzeri (strain A1501) (Pseudomonas stutzeri) protein is Ribosomal RNA small subunit methyltransferase J.